The following is a 273-amino-acid chain: Short-chain dehydrogenase fogB (273 aa).

The NADP(+) site is built by Ile16, Asp66, Arg128, Tyr174, Lys178, Val207, and Thr209. Tyr174 (proton donor) is an active-site residue. Lys178 functions as the Lowers pKa of active site Tyr in the catalytic mechanism.

It belongs to the short-chain dehydrogenases/reductases (SDR) family.

Short-chain dehydrogenase; part of the gene cluster that mediates the biosynthesis of flavoglaucin and congeners (including aspergin, dihydroauroglaucin and auroglaucin), prenylated salicylaldehyde derivatives carrying a saturated or an unsaturated C-7 side chain. The PKS fogA releases the carboxylic acid (8E,10E,12E)-3,5,7-trihydroxytetradeca-8,10,12-trienoic acid as its product, as well as derivatives with one and two double bonds. FogA is indeed able to reduce the initial triketide, thus being at least partially responsible for the differently saturated heptyl side chains of flavoglaucin congeners. The oxidoreductases fogB, fogC and fogD modify the nascent polyketide in fogA-bound form and, together, fogA, fogB, fogC and fogD are necessary for the formation of the aromatic core and the cyclized PKS products are released as salicyl alcohols. In particular, fogB is responsible for oxidation of a hydroxyl group or reduction of remaining double bond(s) at the C-7 residue whereas fogD is probably involved in the reductive release of the modified PKS products. The cytochrome P450 monooxygenase fogE is then responsible for the hydroxylation at C-3 of the benzene ring. The fogE products are substrates of the prenyltransferase fogH and the prenylated benzyl alcohols are subsequently oxidized by the fogF to produce the final aryl aldehydes flavoglaucin and congeners. The short-chain dehydrogenase fogG does not seem to be involved in the biosynthesis of the prenylated salicylaldehyde derivatives. This chain is Short-chain dehydrogenase fogB, found in Aspergillus ruber (strain CBS 135680).